Consider the following 142-residue polypeptide: PDZ domain-containing protein 11 (142 aa).

In terms of domain architecture, PDZ spans 49-131 (TIVLKKPPGA…ILMKVRYFPY (83 aa)).

Its subcellular location is the cytoplasm. This is PDZ domain-containing protein 11 (pdzd11) from Danio rerio (Zebrafish).